The primary structure comprises 508 residues: Maturase K (508 aa).

This sequence belongs to the intron maturase 2 family. MatK subfamily.

The protein resides in the plastid. The protein localises to the chloroplast. In terms of biological role, usually encoded in the trnK tRNA gene intron. Probably assists in splicing its own and other chloroplast group II introns. The sequence is that of Maturase K from Ranunculus trichophyllus (Whitewater crowfoot).